Consider the following 428-residue polypeptide: MKNWKTLLLGIAMIANTSFAAPQVVDKVAAVVNNGVVLESDVDGLMQSVKLNAAQARQQLPDDATLRHQIMERLIMDQIILQMGQKMGVKISDEQLDQAIANIAKQNNMTLNQMRSRLAYDGLNYNTYRNQIRKEMIISEVRNNEVRRRITILPQEVESLAQQVGNQNDASTELNLSHILIPLPENPTSDQVNEAESQARAIVDQARNGADFGKLAIAHSADQQALNGGQMGWGRIQELPGIFAQALSTAKKGDIVGPIRSGVGFHILKVNDLRGESKNISVTEVHARHILLKPSPIMTDEQARVKLEQIAADIKSGKTTFAAAAKEFSQDPGSANQGGDLGWATADIFDPAFRDALTRLNKGQMSAPVHSSFGWHLIELLDTRNVDKTDAAQKDRAYRMLMNRKFSEEAASWMQEQRASAYVKILSN.

The first 20 residues, 1 to 20, serve as a signal peptide directing secretion; that stretch reads MKNWKTLLLGIAMIANTSFA. 2 PpiC domains span residues 171–272 and 282–382; these read STEL…KVND and VTEV…ELLD.

Its subcellular location is the periplasm. The enzyme catalyses [protein]-peptidylproline (omega=180) = [protein]-peptidylproline (omega=0). Its function is as follows. Chaperone involved in the correct folding and assembly of outer membrane proteins. Recognizes specific patterns of aromatic residues and the orientation of their side chains, which are found more frequently in integral outer membrane proteins. May act in both early periplasmic and late outer membrane-associated steps of protein maturation. The protein is Chaperone SurA of Shigella dysenteriae serotype 1 (strain Sd197).